The following is a 539-amino-acid chain: AT-rich interactive domain-containing protein 3A (539 aa).

The disordered stretch occupies residues 1-190 (MKLQAVMETL…PLSGHPQLQD (190 aa)). Positions 55 to 73 (LKIQRAQAAALAAMRAAAA) are enriched in low complexity. Acidic residues predominate over residues 84–100 (SEEEDGESMASDEEDEK). A compositionally biased stretch (basic and acidic residues) spans 101-110 (ERDGESERYQ). The span at 113–141 (ASEEEDLKGKWDEDDFEDEGEDEYEDMEE) shows a compositional bias: acidic residues. The span at 161–173 (HSSQQAFPSQRSQ) shows a compositional bias: polar residues. Residues 209-301 (DPKRKEFLDD…YLYPYECEKR (93 aa)) enclose the ARID domain. In terms of domain architecture, REKLES spans 404–499 (AALEQLREKL…GVLFAQPPTS (96 aa)). The interval 405–448 (ALEQLREKLESGEPPEKKMALGSEEQQRIIQRTIQHNLLAMTAQ) is important for nuclear localization. Positions 450 to 471 (PMNIRINSQAEGRQDSAVNLTT) are homodimerization. Residues 495-502 (QPPTSASG) are important for cytoplasmic localization. Residues 497–512 (PTSASGTSKGSSNRTG) show a composition bias toward polar residues. Residues 497-539 (PTSASGTSKGSSNRTGSIGGGSSNSQAAPPSTPSAPNSNNPSP) form a disordered region. Positions 519 to 539 (SNSQAAPPSTPSAPNSNNPSP) are enriched in low complexity.

As to quaternary structure, homodimer.

The protein localises to the nucleus. It localises to the cytoplasm. Functionally, transcription factor required for smad1 and smad2-mediated responses to TGFbeta during mesoderm induction. The polypeptide is AT-rich interactive domain-containing protein 3A (arid3a) (Xenopus laevis (African clawed frog)).